A 348-amino-acid chain; its full sequence is Anthranilate phosphoribosyltransferase (348 aa).

5-phospho-alpha-D-ribose 1-diphosphate contacts are provided by residues G91, 94–95 (GD), T99, 101–104 (NIST), 119–127 (KHGNRSASG), and S131. G91 provides a ligand contact to anthranilate. S103 is a binding site for Mg(2+). Residue N122 coordinates anthranilate. Position 177 (R177) interacts with anthranilate. Residues D236 and E237 each coordinate Mg(2+).

It belongs to the anthranilate phosphoribosyltransferase family. As to quaternary structure, homodimer. It depends on Mg(2+) as a cofactor.

The catalysed reaction is N-(5-phospho-beta-D-ribosyl)anthranilate + diphosphate = 5-phospho-alpha-D-ribose 1-diphosphate + anthranilate. The protein operates within amino-acid biosynthesis; L-tryptophan biosynthesis; L-tryptophan from chorismate: step 2/5. Catalyzes the transfer of the phosphoribosyl group of 5-phosphorylribose-1-pyrophosphate (PRPP) to anthranilate to yield N-(5'-phosphoribosyl)-anthranilate (PRA). In Synechococcus elongatus (strain ATCC 33912 / PCC 7942 / FACHB-805) (Anacystis nidulans R2), this protein is Anthranilate phosphoribosyltransferase.